The following is a 405-amino-acid chain: MSDITVANYHAFPDARGHFGRYGGRFVAETLIGPLQELAQAYDAARHDPDFIAAYNKDLKDYVGRPSPIYHAERLSRKVGGAQILLKREDLNHTGAHKINNTIGQALLAARMGKTRIIAETGAGQHGVASATVAARLGLECVVYMGATDIQRQQINVYRMKLLGATVVPVTSGSATLKDALNEAMRDWVTHVGHTFYIIGTVAGPDPYPRMVRDFNAIVGREARAQMIEDYGRLPDAMTACVGGGSNAIGLFHAFLNDASVRIYGAEAAGDGIATGRHAASIVAGRPGVLHGNRTYVVCDDDGQILETHSVSAGLDYPGVGPEHAFLADSGRVQYVGIRDEEALAAFHLLAHTEGILAALESSHAVAHTMTLARDLPKDALVLCNLSGRGDKDVHTIAAREGVRV.

Residue Lys-98 is modified to N6-(pyridoxal phosphate)lysine.

The protein belongs to the TrpB family. Tetramer of two alpha and two beta chains. Pyridoxal 5'-phosphate is required as a cofactor.

It carries out the reaction (1S,2R)-1-C-(indol-3-yl)glycerol 3-phosphate + L-serine = D-glyceraldehyde 3-phosphate + L-tryptophan + H2O. The protein operates within amino-acid biosynthesis; L-tryptophan biosynthesis; L-tryptophan from chorismate: step 5/5. Its function is as follows. The beta subunit is responsible for the synthesis of L-tryptophan from indole and L-serine. This chain is Tryptophan synthase beta chain, found in Xylella fastidiosa (strain M23).